Consider the following 380-residue polypeptide: MGTKGKVIKCKAAIAWEAGKPLCIEEVEVAPPKAHEVRIQIIATSLCHTDATVIDSKFEGLAFPVIVGHEAAGIVESIGPGVTNVKPGDKVIPLYAPLCRKCKFCLSPLTNLCGKISNLKSPASDQQLMEDKTSRFTCKGKPVYHFFGTSTFSQYTVVSDINLAKIDDDANLERVCLLGCGFSTGYGAAINNAKVTPGSTCAVFGLGGVGLSAVMGCKAAGASRIIGIDINSEKFVKAKALGATDCLNPRDLHKPIQEVIIELTKGGVDFALDCAGGSETMKAALDCTTAGWGSCTFIGVAAGSKGLTIFPEELIIGRTINGTFFGGWKSVDSIPKLVTDYKNKKFNLDALVTHTLPFDKISEAFDLMNQGKSVRTILIF.

C47 contacts Zn(2+). Position 48-49 (48-49 (HT)) interacts with NAD(+). Zn(2+)-binding residues include H69, C99, C102, C105, and C113. S121 bears the Phosphoserine mark. Residue C180 participates in Zn(2+) binding. NAD(+) contacts are provided by residues 205–210 (GLGGVG), D229, and K234. S278 bears the Phosphoserine mark. NAD(+)-binding positions include 298–300 (IGV), 323–325 (TFF), and R375.

This sequence belongs to the zinc-containing alcohol dehydrogenase family. Class-II subfamily. In terms of assembly, homodimer. Requires Zn(2+) as cofactor.

The protein resides in the cytoplasm. It catalyses the reaction all-trans-retinol + NAD(+) = all-trans-retinal + NADH + H(+). The catalysed reaction is 9-cis-retinol + NAD(+) = 9-cis-retinal + NADH + H(+). It carries out the reaction 20-oxo-(5Z,8Z,11Z,14Z)-eicosatetraenoate + NAD(+) + H2O = (5Z,8Z,11Z,14Z)-eicosatetraenedioate + NADH + 2 H(+). The enzyme catalyses 20-hydroxy-(5Z,8Z,11Z,14Z)-eicosatetraenoate + NAD(+) = 20-oxo-(5Z,8Z,11Z,14Z)-eicosatetraenoate + NADH + H(+). It catalyses the reaction 1,4-benzoquinone + NADH + H(+) = hydroquinone + NAD(+). Its activity is regulated as follows. Oxydation of 20-HETE is inhibited by low concentrations of N-heptylformamide. Oxydation of 20-HETE is a decreased by 55-65% by either all-trans-retinol or all-trans-retinoic acid. Strongly inhibited by omega-hydroxy fatty acids. Functionally, catalyzes the NAD-dependent oxidation of either all-trans-retinol or 9-cis-retinol. Also oxidizes long chain omega-hydroxy fatty acids, such as 20-HETE, producing both the intermediate aldehyde, 20-oxoarachidonate and the end product, a dicarboxylic acid, (5Z,8Z,11Z,14Z)-eicosatetraenedioate. Also catalyzes the reduction of benzoquinones. This is All-trans-retinol dehydrogenase [NAD(+)] ADH4 from Homo sapiens (Human).